The primary structure comprises 327 residues: Alkanal monooxygenase beta chain (327 aa).

The protein belongs to the bacterial luciferase oxidoreductase family. In terms of assembly, heterodimer of an alpha and a beta chain.

The enzyme catalyses a long-chain fatty aldehyde + FMNH2 + O2 = a long-chain fatty acid + hnu + FMN + H2O + 2 H(+). Light-emitting reaction in luminous bacteria. The specific role of the beta subunit is unknown, but it is absolutely required for bioluminescence activity. This Photorhabdus luminescens (Xenorhabdus luminescens) protein is Alkanal monooxygenase beta chain (luxB).